The primary structure comprises 149 residues: 5-hydroxytryptamine receptor 1E (149 aa).

At 1 to 6 (HQPANY) the chain is on the extracellular side. Residues 7–31 (LICSLAVTDLLVAVLVMPLSIMYIV) form a helical membrane-spanning segment. Residues 32-39 (MDSWRLGY) are Cytoplasmic-facing. Residues 40–65 (FICEVWLSVDMTCCTCSILHLCVIAL) traverse the membrane as a helical segment. C42 and C120 are joined by a disulfide. Residues D49 and C53 each coordinate serotonin. The DRY motif; important for ligand-induced conformation changes motif lies at 66 to 68 (DRY). Over 66-85 (DRYWAITNAIEYARKRTAKR) the chain is Extracellular. The chain crosses the membrane as a helical span at residues 86 to 104 (AGLMILTVWTISIFISMPP). The Cytoplasmic segment spans residues 105 to 149 (LFWRSHRQLSPPPSQCAIQHDHVIYTIYSTLGAFYIPLTLILILY).

Belongs to the G-protein coupled receptor 1 family.

The protein localises to the cell membrane. Its function is as follows. G-protein coupled receptor for 5-hydroxytryptamine (serotonin). Also functions as a receptor for various alkaloids and psychoactive substances. Ligand binding causes a conformation change that triggers signaling via guanine nucleotide-binding proteins (G proteins) and modulates the activity of downstream effectors, such as adenylate cyclase. HTR1E is coupled to G(i)/G(o) G alpha proteins and mediates inhibitory neurotransmission by inhibiting adenylate cyclase activity. The protein is 5-hydroxytryptamine receptor 1E (HTR1E) of Sus scrofa (Pig).